Consider the following 946-residue polypeptide: Zinc finger protein rotund (946 aa).

Disordered regions lie at residues 10–30 and 156–269; these read GPQLAHHPHSNPHNSSHGHSD and FRKP…HNLN. Over residues 161 to 176 the composition is skewed to polar residues; the sequence is NNNGYSWSTGNNNEVV. A compositionally biased stretch (low complexity) spans 177-188; it reads SHSSNGHTNNHP. Polar residues-rich tracts occupy residues 198-230 and 242-269; these read ASATQATSVSAINLNQAQPASQTRSNFGSSIKS and TCKSQENNSGQNPTPNSLSDHNPAHNLN. C2H2-type zinc fingers lie at residues 488 to 510, 517 to 539, 545 to 567, 573 to 597, 603 to 625, and 634 to 656; these read YQCKMCPQIFSSKADLQLHTQIH, YKCTQCSKAFANSSYLSQHTRIH, YRCEICQRKFTQLSHLQQHIRTH, YKCRHPGCQKAFSQLSNLQSHSRCH, FKCNSCYKCFSDEPSLLEHIPKH, and HICQYCGKSYTQETYLTKHMQKH. A disordered region spans residues 683–853; sequence GGSANPANGP…TPSAVGPYDA (171 aa). 2 stretches are compositionally biased toward low complexity: residues 739-762 and 770-790; these read HQQQQQQQQQQQQQQQQQQQQQQQ and HGVPPQQHVPPQQQQQQQQQQ. The span at 813 to 822 shows a compositional bias: polar residues; that stretch reads TAPNGSQSNG. Residues 828–841 show a composition bias toward basic and acidic residues; the sequence is QPHHRMPDPVREDI.

It belongs to the krueppel C2H2-type zinc-finger protein family. In terms of assembly, interacts with nab; which acts as a corepressor. As to expression, isoform rn and isoform roe are expressed in non-overlapping domains in the larval imaginal disks. Isoform rn is first expressed during the early third larval instar in the leg, wing, haltere and antennal part of the eye-antennal imaginal disk. It is observed as a ring in the leg and antenna disks and in the presumptive wing pouch and capitellum of wing and haltere disks respectively. In wing disk it is expressed in 3 concentric domains in the wing pouch. In late third instar, expression of isoform rn in the leg disk is no longer evident, but is maintained in the other disks. Isoform roe appears in the third instar and is confined to the eye part of the eye-antennal imaginal disk in a band of 4-6 cells at the morphogenetic furrow. There is no evidence of roe expression in other imaginal disks.

It is found in the nucleus. Transcription factor involved in imaginal disks development. Isoform rn is required in the wings, antenna, haltere, proboscis and legs disks, while isoform roe is required in the eye disk. Together with nab corepressor, it is involved in the initiation and maintenance of wingless (wg) expression in the wing hinge, by limiting the expression of wg to this compartment. Also required for the epithelial-mesenchymal transition branch of basolateral junctions signaling. The sequence is that of Zinc finger protein rotund from Drosophila melanogaster (Fruit fly).